Consider the following 420-residue polypeptide: D-tagatose-1,6-bisphosphate aldolase subunit GatZ (420 aa).

This sequence belongs to the GatZ/KbaZ family. GatZ subfamily. In terms of assembly, forms a complex with GatY.

Its pathway is carbohydrate metabolism; D-tagatose 6-phosphate degradation; D-glyceraldehyde 3-phosphate and glycerone phosphate from D-tagatose 6-phosphate: step 2/2. Component of the tagatose-1,6-bisphosphate aldolase GatYZ that is required for full activity and stability of the Y subunit. Could have a chaperone-like function for the proper and stable folding of GatY. When expressed alone, GatZ does not show any aldolase activity. Is involved in the catabolism of galactitol. In Escherichia coli O8 (strain IAI1), this protein is D-tagatose-1,6-bisphosphate aldolase subunit GatZ.